The sequence spans 126 residues: Small ribosomal subunit protein uS13 (126 aa).

Residues 95-126 are disordered; that stretch reads GLPVRGQQTRTNARTRKGKRKTVGGTKKAKAK. Residues 107-126 show a composition bias toward basic residues; sequence ARTRKGKRKTVGGTKKAKAK.

It belongs to the universal ribosomal protein uS13 family. In terms of assembly, part of the 30S ribosomal subunit. Forms a loose heterodimer with protein S19. Forms two bridges to the 50S subunit in the 70S ribosome.

In terms of biological role, located at the top of the head of the 30S subunit, it contacts several helices of the 16S rRNA. In the 70S ribosome it contacts the 23S rRNA (bridge B1a) and protein L5 of the 50S subunit (bridge B1b), connecting the 2 subunits; these bridges are implicated in subunit movement. Contacts the tRNAs in the A and P-sites. This is Small ribosomal subunit protein uS13 from Aquifex aeolicus (strain VF5).